The chain runs to 351 residues: sn-glycerol-3-phosphate import ATP-binding protein UgpC (351 aa).

An ABC transporter domain is found at 4 to 234; that stretch reads ITLDNLVKAY…PATTFVAGFI (231 aa). Residue 36 to 43 coordinates ATP; the sequence is GPSGCGKS.

Belongs to the ABC transporter superfamily. sn-glycerol-3-phosphate importer (TC 3.A.1.1.3) family. In terms of assembly, the complex is composed of two ATP-binding proteins (UgpC), two transmembrane proteins (UgpA and UgpE) and a solute-binding protein (UgpB).

The protein localises to the cell inner membrane. It carries out the reaction sn-glycerol 3-phosphate(out) + ATP + H2O = sn-glycerol 3-phosphate(in) + ADP + phosphate + H(+). Functionally, part of the ABC transporter complex UgpBAEC involved in sn-glycerol-3-phosphate (G3P) import. Responsible for energy coupling to the transport system. In Ruegeria pomeroyi (strain ATCC 700808 / DSM 15171 / DSS-3) (Silicibacter pomeroyi), this protein is sn-glycerol-3-phosphate import ATP-binding protein UgpC.